Consider the following 276-residue polypeptide: Diaminopimelate epimerase (276 aa).

Residues asparagine 13, glutamine 46, and asparagine 66 each contribute to the substrate site. Cysteine 75 serves as the catalytic Proton donor. Residues 76–77 (GN), asparagine 159, asparagine 192, and 210–211 (ER) contribute to the substrate site. The Proton acceptor role is filled by cysteine 219. 220–221 (GT) serves as a coordination point for substrate.

Belongs to the diaminopimelate epimerase family. In terms of assembly, homodimer.

It is found in the cytoplasm. The enzyme catalyses (2S,6S)-2,6-diaminopimelate = meso-2,6-diaminopimelate. It participates in amino-acid biosynthesis; L-lysine biosynthesis via DAP pathway; DL-2,6-diaminopimelate from LL-2,6-diaminopimelate: step 1/1. Its function is as follows. Catalyzes the stereoinversion of LL-2,6-diaminopimelate (L,L-DAP) to meso-diaminopimelate (meso-DAP), a precursor of L-lysine and an essential component of the bacterial peptidoglycan. The chain is Diaminopimelate epimerase from Tolumonas auensis (strain DSM 9187 / NBRC 110442 / TA 4).